The following is an 86-amino-acid chain: Probable protein BRICK1 (86 aa).

A coiled-coil region spans residues 47 to 81 (EATTKSKLASLNEKLDILERKLEVLEVQVSSATTN).

It belongs to the BRK1 family. In terms of assembly, binds SCAR.

Its subcellular location is the cytoplasm. The protein localises to the cytoskeleton. Functionally, involved in regulation of actin and microtubule organization. Part of a WAVE complex that activates the Arp2/3 complex. The protein is Probable protein BRICK1 of Oryza sativa subsp. japonica (Rice).